The following is a 614-amino-acid chain: Bifunctional 3'-phosphoadenosine 5'-phosphosulfate synthase 2 (614 aa).

An adenylyl-sulfate kinase region spans residues 1–215 (MSGIKKQKTE…VVELLQEQNI (215 aa)). 52–57 (GAGKTT) serves as a coordination point for ATP. Adenosine 5'-phosphosulfate contacts are provided by residues 79 to 82 (DNVR), F91, 96 to 99 (REEN), 122 to 123 (IS), K161, and 174 to 175 (GF). ATP contacts are provided by residues S197, 409–412 (QLRN), 511–515 (GRDPA), and A553. The interval 224 to 614 (IHELFVPENK…TDYYRSLEKN (391 aa)) is sulfate adenylyltransferase.

This sequence in the N-terminal section; belongs to the APS kinase family. It in the C-terminal section; belongs to the sulfate adenylyltransferase family. As to expression, expressed in cartilage and adrenal gland.

The enzyme catalyses sulfate + ATP + H(+) = adenosine 5'-phosphosulfate + diphosphate. The catalysed reaction is adenosine 5'-phosphosulfate + ATP = 3'-phosphoadenylyl sulfate + ADP + H(+). The protein operates within sulfur metabolism; sulfate assimilation. In terms of biological role, bifunctional enzyme with both ATP sulfurylase and APS kinase activity, which mediates two steps in the sulfate activation pathway. The first step is the transfer of a sulfate group to ATP to yield adenosine 5'-phosphosulfate (APS), and the second step is the transfer of a phosphate group from ATP to APS yielding 3'-phosphoadenylylsulfate/PAPS, the activated sulfate donor used by sulfotransferases. In mammals, PAPS is the sole source of sulfate while APS appears to only be an intermediate in the sulfate-activation pathway. Plays indirectly an important role in skeletogenesis during postnatal growth. The chain is Bifunctional 3'-phosphoadenosine 5'-phosphosulfate synthase 2 (PAPSS2) from Homo sapiens (Human).